Here is a 447-residue protein sequence, read N- to C-terminus: N-succinylarginine dihydrolase (447 aa).

Substrate is bound by residues alanine 19 to serine 28, asparagine 110, and histidine 137 to arginine 138. Glutamate 174 is an active-site residue. Residue arginine 212 coordinates substrate. The active site involves histidine 248. 2 residues coordinate substrate: aspartate 250 and asparagine 359. The active-site Nucleophile is cysteine 365.

Belongs to the succinylarginine dihydrolase family. In terms of assembly, homodimer.

It catalyses the reaction N(2)-succinyl-L-arginine + 2 H2O + 2 H(+) = N(2)-succinyl-L-ornithine + 2 NH4(+) + CO2. It participates in amino-acid degradation; L-arginine degradation via AST pathway; L-glutamate and succinate from L-arginine: step 2/5. Its function is as follows. Catalyzes the hydrolysis of N(2)-succinylarginine into N(2)-succinylornithine, ammonia and CO(2). The polypeptide is N-succinylarginine dihydrolase (Escherichia coli O6:K15:H31 (strain 536 / UPEC)).